The primary structure comprises 52 residues: ERMES regulator 1 (52 aa).

Residues 1 to 27 (MIFFFNQIRSIFTALHTPTQQIQLSRR) are Mitochondrial intermembrane-facing. Residues 28–46 (AFFQFLGYLGSCVVISLAA) traverse the membrane as a helical segment. Residues 47-52 (QSKYVQ) are Cytoplasmic-facing.

The protein belongs to the EMR1 family.

It is found in the mitochondrion outer membrane. Functionally, mediates the formation of endoplasmic reticulum (ER)-mitochondria encounter structure (ERMES) foci, thereby contributing to the formation of ER-mitochondrial contact sites. The chain is ERMES regulator 1 from Saccharomyces cerevisiae (strain ATCC 204508 / S288c) (Baker's yeast).